Here is a 1129-residue protein sequence, read N- to C-terminus: Nuclear pore complex protein 15 (1129 aa).

This sequence belongs to the nucleoporin Nup133 family.

The protein resides in the nucleus envelope. It is found in the nucleus. It localises to the nuclear pore complex. Important for early nematode development. The sequence is that of Nuclear pore complex protein 15 from Caenorhabditis elegans.